The following is a 312-amino-acid chain: tRNA-dihydrouridine(16) synthase (312 aa).

Residues 7-9 (PMQ) and Gln68 contribute to the FMN site. Cys98 (proton donor) is an active-site residue. FMN is bound by residues Lys139, 200 to 202 (NGE), and 224 to 225 (GR).

This sequence belongs to the Dus family. DusC subfamily. It depends on FMN as a cofactor.

It carries out the reaction 5,6-dihydrouridine(16) in tRNA + NADP(+) = uridine(16) in tRNA + NADPH + H(+). It catalyses the reaction 5,6-dihydrouridine(16) in tRNA + NAD(+) = uridine(16) in tRNA + NADH + H(+). Its function is as follows. Catalyzes the synthesis of 5,6-dihydrouridine (D), a modified base found in the D-loop of most tRNAs, via the reduction of the C5-C6 double bond in target uridines. Specifically modifies U16 in tRNAs. In Pasteurella multocida (strain Pm70), this protein is tRNA-dihydrouridine(16) synthase.